Consider the following 677-residue polypeptide: Glutamine--fructose-6-phosphate aminotransferase [isomerizing] 1 (677 aa).

The active-site Nucleophile is the cysteine 2. The Glutamine amidotransferase type-2 domain occupies 2–269 (CGIFAYLNFH…DGEVVNLKDG (268 aa)). SIS domains follow at residues 353–492 (HLKT…DTIS) and 524–667 (LAQL…VDQP). Residues 370-371 (TS), 415-417 (SQS), threonine 420, and histidine 571 contribute to the substrate site.

Homotetramer, may also exist as homodimers. Highly expressed in flowers specifically in mature anthers, mature pollen grains and pollen tubes. Barely observed in roots, leaves and stems.

The catalysed reaction is D-fructose 6-phosphate + L-glutamine = D-glucosamine 6-phosphate + L-glutamate. The protein operates within nucleotide-sugar biosynthesis; UDP-N-acetyl-alpha-D-glucosamine biosynthesis; alpha-D-glucosamine 6-phosphate from D-fructose 6-phosphate: step 1/1. Controls the flux of glucose into the hexosamine biosynthetic pathway (HBP) leading to glucosamine (GlcN) content homeostasis. Involved in regulating the availability of precursors for N- and O-linked glycosylation of proteins. Required during pollen maturation and pollen tube formation by triggering polar deposition of pectin and callose in the pollen cell wall. Promotes tolerance to tunicamycin (Tm), an inhibitor of proteins N-glycosylation in endoplasmic reticulum (ER). The polypeptide is Glutamine--fructose-6-phosphate aminotransferase [isomerizing] 1 (Arabidopsis thaliana (Mouse-ear cress)).